The primary structure comprises 503 residues: Aspartyl/glutamyl-tRNA(Asn/Gln) amidotransferase subunit B (503 aa).

This sequence belongs to the GatB/GatE family. GatB subfamily. In terms of assembly, heterotrimer of A, B and C subunits.

It catalyses the reaction L-glutamyl-tRNA(Gln) + L-glutamine + ATP + H2O = L-glutaminyl-tRNA(Gln) + L-glutamate + ADP + phosphate + H(+). The catalysed reaction is L-aspartyl-tRNA(Asn) + L-glutamine + ATP + H2O = L-asparaginyl-tRNA(Asn) + L-glutamate + ADP + phosphate + 2 H(+). In terms of biological role, allows the formation of correctly charged Asn-tRNA(Asn) or Gln-tRNA(Gln) through the transamidation of misacylated Asp-tRNA(Asn) or Glu-tRNA(Gln) in organisms which lack either or both of asparaginyl-tRNA or glutaminyl-tRNA synthetases. The reaction takes place in the presence of glutamine and ATP through an activated phospho-Asp-tRNA(Asn) or phospho-Glu-tRNA(Gln). This is Aspartyl/glutamyl-tRNA(Asn/Gln) amidotransferase subunit B from Nocardia farcinica (strain IFM 10152).